A 140-amino-acid chain; its full sequence is ATP synthase epsilon chain (140 aa).

Belongs to the ATPase epsilon chain family. In terms of assembly, F-type ATPases have 2 components, CF(1) - the catalytic core - and CF(0) - the membrane proton channel. CF(1) has five subunits: alpha(3), beta(3), gamma(1), delta(1), epsilon(1). CF(0) has three main subunits: a, b and c.

It localises to the cell inner membrane. Its function is as follows. Produces ATP from ADP in the presence of a proton gradient across the membrane. The polypeptide is ATP synthase epsilon chain (Stenotrophomonas maltophilia (strain R551-3)).